The chain runs to 427 residues: Transcobalamin-2 (427 aa).

The first 18 residues, 1 to 18 (MELLKALLLLSGVLGALA), serve as a signal peptide directing secretion. 3 disulfide bridges follow: cysteine 21–cysteine 268, cysteine 116–cysteine 310, and cysteine 165–cysteine 208. Cob(II)alamin-binding positions include 152–156 (TSYYQ), histidine 193, 193–197 (HLSVD), asparagine 245, serine 248, glutamine 292, and 395–397 (WQL).

Belongs to the eukaryotic cobalamin transport proteins family. In terms of assembly, interacts with CD320 (via LDL-receptor class A domains).

The protein resides in the secreted. Functionally, primary vitamin B12-binding and transport protein. Delivers cobalamin to cells. This chain is Transcobalamin-2 (Tcn2), found in Rattus norvegicus (Rat).